The chain runs to 85 residues: MTILSAITSISRPNKISKSVVSSNGGASLSMGSNSVACGGCGGGSSVLIAAGGSGGLFVGAAVAVDLSIHASVGIAIGSTSCHCN.

This sequence belongs to the hssA/B family.

The protein is HssA/B-like protein 62 (hssl62) of Dictyostelium discoideum (Social amoeba).